Consider the following 201-residue polypeptide: Glutathione peroxidase 1 (201 aa).

Residue serine 32 is modified to Phosphoserine. Residue selenocysteine 47 is part of the active site. Selenocysteine 47 is a non-standard amino acid (selenocysteine). N6-acetyllysine; alternate is present on residues lysine 86, lysine 112, and lysine 146. 3 positions are modified to N6-succinyllysine; alternate: lysine 86, lysine 112, and lysine 146. Residues serine 195 and serine 199 each carry the phosphoserine modification.

Belongs to the glutathione peroxidase family. In terms of assembly, homotetramer. Interacts with MIEN1. During periods of oxidative stress, Sec-47 may react with a superoxide radical, irreversibly lose hydroselenide and be converted to dehydroalanine.

It localises to the cytoplasm. The catalysed reaction is 2 glutathione + H2O2 = glutathione disulfide + 2 H2O. The enzyme catalyses (12S)-hydroperoxy-(5Z,8Z,10E,14Z)-eicosatetraenoate + 2 glutathione = (12S)-hydroxy-(5Z,8Z,10E,14Z)-eicosatetraenoate + glutathione disulfide + H2O. Its function is as follows. Protects the hemoglobin in erythrocytes from oxidative breakdown. In platelets, plays a crucial role of glutathione peroxidase in the arachidonic acid metabolism. This is Glutathione peroxidase 1 (GPX1) from Hylobates lar (Lar gibbon).